A 257-amino-acid chain; its full sequence is Probable ABC transporter arginine-binding protein ArtJ (257 aa).

The N-terminal stretch at 1-23 is a signal peptide; that stretch reads MCIKRKKTWIAFLAVVCSFCLTG. Residues N41, E48, G100, S102, R107, and Y151 each coordinate L-arginine.

The protein belongs to the bacterial solute-binding protein 3 family.

The protein localises to the secreted. It localises to the cell surface. Functionally, probably part of an ABC transporter complex involved in arginine transport. Binds arginine. Interacts with host epithelial cells, suggesting a role in host-cell adhesion during infection. The chain is Probable ABC transporter arginine-binding protein ArtJ from Chlamydia trachomatis serovar D (strain ATCC VR-885 / DSM 19411 / UW-3/Cx).